We begin with the raw amino-acid sequence, 153 residues long: Large ribosomal subunit protein uL15 (153 aa).

The tract at residues 1–42 is disordered; it reads MRLNTIKPGMGSTKPRRRVGRGIGSGLGKTCGRGHKGQKSRA. Residues 21–31 are compositionally biased toward gly residues; it reads RGIGSGLGKTC.

This sequence belongs to the universal ribosomal protein uL15 family. As to quaternary structure, part of the 50S ribosomal subunit.

Binds to the 23S rRNA. The chain is Large ribosomal subunit protein uL15 from Nitrosomonas eutropha (strain DSM 101675 / C91 / Nm57).